The chain runs to 580 residues: 2-succinyl-5-enolpyruvyl-6-hydroxy-3-cyclohexene-1-carboxylate synthase (580 aa).

Belongs to the TPP enzyme family. MenD subfamily. Homodimer. The cofactor is Mg(2+). It depends on Mn(2+) as a cofactor. Thiamine diphosphate is required as a cofactor.

The enzyme catalyses isochorismate + 2-oxoglutarate + H(+) = 5-enolpyruvoyl-6-hydroxy-2-succinyl-cyclohex-3-ene-1-carboxylate + CO2. Its pathway is quinol/quinone metabolism; 1,4-dihydroxy-2-naphthoate biosynthesis; 1,4-dihydroxy-2-naphthoate from chorismate: step 2/7. The protein operates within quinol/quinone metabolism; menaquinone biosynthesis. Catalyzes the thiamine diphosphate-dependent decarboxylation of 2-oxoglutarate and the subsequent addition of the resulting succinic semialdehyde-thiamine pyrophosphate anion to isochorismate to yield 2-succinyl-5-enolpyruvyl-6-hydroxy-3-cyclohexene-1-carboxylate (SEPHCHC). In Listeria welshimeri serovar 6b (strain ATCC 35897 / DSM 20650 / CCUG 15529 / CIP 8149 / NCTC 11857 / SLCC 5334 / V8), this protein is 2-succinyl-5-enolpyruvyl-6-hydroxy-3-cyclohexene-1-carboxylate synthase.